The chain runs to 99 residues: Ubiquitin-related modifier 1 homolog 2 (99 aa).

Glycine 99 is modified (1-thioglycine). Glycine 99 is covalently cross-linked (Glycyl lysine isopeptide (Gly-Lys) (interchain with K-? in acceptor proteins)).

The protein belongs to the URM1 family. In terms of processing, C-terminal thiocarboxylation occurs in 2 steps, it is first acyl-adenylated (-COAMP) via the hesA/moeB/thiF part of the MOCS3 homolog, then thiocarboxylated (-COSH) via the rhodanese domain of the MOCS3 homolog.

Its subcellular location is the cytoplasm. The protein operates within tRNA modification; 5-methoxycarbonylmethyl-2-thiouridine-tRNA biosynthesis. In terms of biological role, acts as a sulfur carrier required for 2-thiolation of mcm(5)S(2)U at tRNA wobble positions of cytosolic tRNA(Lys), tRNA(Glu) and tRNA(Gln). Serves as sulfur donor in tRNA 2-thiolation reaction by being thiocarboxylated (-COSH) at its C-terminus by MOCS3. The sulfur is then transferred to tRNA to form 2-thiolation of mcm(5)S(2)U. Also acts as a ubiquitin-like protein (UBL) that is covalently conjugated via an isopeptide bond to lysine residues of target proteins. The thiocarboxylated form serves as substrate for conjugation and oxidative stress specifically induces the formation of UBL-protein conjugates. The polypeptide is Ubiquitin-related modifier 1 homolog 2 (Arabidopsis thaliana (Mouse-ear cress)).